Reading from the N-terminus, the 1392-residue chain is DNA-directed RNA polymerase subunit beta'' (1392 aa).

The Zn(2+) site is built by cysteine 224, cysteine 295, cysteine 302, and cysteine 305.

Belongs to the RNA polymerase beta' chain family. RpoC2 subfamily. As to quaternary structure, in plastids the minimal PEP RNA polymerase catalytic core is composed of four subunits: alpha, beta, beta', and beta''. When a (nuclear-encoded) sigma factor is associated with the core the holoenzyme is formed, which can initiate transcription. The cofactor is Zn(2+).

The protein localises to the plastid. Its subcellular location is the chloroplast. It catalyses the reaction RNA(n) + a ribonucleoside 5'-triphosphate = RNA(n+1) + diphosphate. In terms of biological role, DNA-dependent RNA polymerase catalyzes the transcription of DNA into RNA using the four ribonucleoside triphosphates as substrates. In Solanum tuberosum (Potato), this protein is DNA-directed RNA polymerase subunit beta''.